The chain runs to 837 residues: Tuftelin-interacting protein 11 (837 aa).

Basic and acidic residues-rich tracts occupy residues 1-13 (MSLS…GEGR) and 53-64 (VWAERDSDDERP). Disordered regions lie at residues 1–21 (MSLS…DDER), 53–72 (VWAE…KRAR), and 85–133 (LKKG…KGFA). The segment at 1–50 (MSLSHLYRDGEGRIDDDDDERENFEITDWDLQNEFNPNRQRHWQTKEEAT) is required for interaction with DHX15. A phosphoserine mark is found at serine 2, serine 59, and serine 98. The span at 91-102 (EEAELEDSDDEE) shows a compositional bias: acidic residues. Positions 103 to 116 (KPVKQDDFPKDFGP) are enriched in basic and acidic residues. A Phosphoserine modification is found at serine 144. The region spanning 149-195 (TKGIGQKLLQKMGYVPGRGLGKNAQGIINPIEAKQRKGKGAVGAYGS) is the G-patch domain. Positions 179–236 (IEAKQRKGKGAVGAYGSERTTQSMQDFPVVDSEEEAEEEFQKELSQWRKDPSGSKKKP) are disordered. The residue at position 210 (serine 210) is a Phosphoserine. A compositionally biased stretch (basic and acidic residues) spans 217 to 231 (EFQKELSQWRKDPSG). The Nuclear localization signal motif lies at 700–705 (VKDKFN). The tract at residues 710 to 734 (IMNRAVSSNVGAYMQPGARENIAYL) is required for nuclear speckle localization.

This sequence belongs to the TFP11/STIP family. In terms of assembly, identified in the spliceosome C complex. Found in the Intron Large (IL) complex, a post-mRNA release spliceosomal complex containing the excised intron, U2, U5 and U6 snRNPs, and splicing factors. Interacts with TUFT1. Interacts with DHX15; indicative for a recruitment of DHX15 to the IL complex. Interacts with GCFC2.

It localises to the cytoplasm. The protein resides in the nucleus. In terms of biological role, involved in pre-mRNA splicing, specifically in spliceosome disassembly during late-stage splicing events. Intron turnover seems to proceed through reactions in two lariat-intron associated complexes termed Intron Large (IL) and Intron Small (IS). In cooperation with DHX15 seems to mediate the transition of the U2, U5 and U6 snRNP-containing IL complex to the snRNP-free IS complex leading to efficient debranching and turnover of excised introns. May play a role in the differentiation of ameloblasts and odontoblasts or in the forming of the enamel extracellular matrix. The polypeptide is Tuftelin-interacting protein 11 (TFIP11) (Pongo abelii (Sumatran orangutan)).